The chain runs to 164 residues: Lipoprotein signal peptidase (164 aa).

The next 4 helical transmembrane spans lie at 6–26, 39–59, 65–85, and 88–108; these read LGILTAVIALALDQATKLWLL, VTSFFDLVLAWNTGISYGWFA, GQILMLAFKAVAIVALAIWMA, and TTKLATIGLGLIIGGAIGNAI. Active-site residues include Asp118 and Asp140. A helical transmembrane segment spans residues 141-161; sequence VAIVVGVVALLYDSLIGAPAV.

The protein belongs to the peptidase A8 family.

It localises to the cell inner membrane. The enzyme catalyses Release of signal peptides from bacterial membrane prolipoproteins. Hydrolyzes -Xaa-Yaa-Zaa-|-(S,diacylglyceryl)Cys-, in which Xaa is hydrophobic (preferably Leu), and Yaa (Ala or Ser) and Zaa (Gly or Ala) have small, neutral side chains.. Its pathway is protein modification; lipoprotein biosynthesis (signal peptide cleavage). In terms of biological role, this protein specifically catalyzes the removal of signal peptides from prolipoproteins. This is Lipoprotein signal peptidase from Rhodopseudomonas palustris (strain TIE-1).